The sequence spans 233 residues: Uridylate kinase (233 aa).

Residues 8–11 (KLSG), G51, and R55 contribute to the ATP site. UMP-binding positions include D68 and 129–136 (TSNPFFTT). ATP contacts are provided by T156, Y162, and D165.

Belongs to the UMP kinase family. In terms of assembly, homohexamer.

The protein localises to the cytoplasm. It carries out the reaction UMP + ATP = UDP + ADP. It functions in the pathway pyrimidine metabolism; CTP biosynthesis via de novo pathway; UDP from UMP (UMPK route): step 1/1. With respect to regulation, inhibited by UTP. Its function is as follows. Catalyzes the reversible phosphorylation of UMP to UDP. In Pseudothermotoga lettingae (strain ATCC BAA-301 / DSM 14385 / NBRC 107922 / TMO) (Thermotoga lettingae), this protein is Uridylate kinase.